The sequence spans 102 residues: Small ribosomal subunit protein uS10 (102 aa).

The protein belongs to the universal ribosomal protein uS10 family. Part of the 30S ribosomal subunit.

In terms of biological role, involved in the binding of tRNA to the ribosomes. This Bacillus cereus (strain ATCC 10987 / NRS 248) protein is Small ribosomal subunit protein uS10.